Consider the following 394-residue polypeptide: Dual-specificity RNA methyltransferase RlmN (394 aa).

Residue Glu116 is the Proton acceptor of the active site. Residues 122-365 (EEDRGTLCVS…SPIRTPRGED (244 aa)) form the Radical SAM core domain. Residues Cys129 and Cys370 are joined by a disulfide bond. 3 residues coordinate [4Fe-4S] cluster: Cys136, Cys140, and Cys143. S-adenosyl-L-methionine contacts are provided by residues 196 to 197 (GE), Ser228, 250 to 252 (SFH), and Asn327. The S-methylcysteine intermediate role is filled by Cys370.

The protein belongs to the radical SAM superfamily. RlmN family. [4Fe-4S] cluster serves as cofactor.

It localises to the cytoplasm. It catalyses the reaction adenosine(2503) in 23S rRNA + 2 reduced [2Fe-2S]-[ferredoxin] + 2 S-adenosyl-L-methionine = 2-methyladenosine(2503) in 23S rRNA + 5'-deoxyadenosine + L-methionine + 2 oxidized [2Fe-2S]-[ferredoxin] + S-adenosyl-L-homocysteine. The catalysed reaction is adenosine(37) in tRNA + 2 reduced [2Fe-2S]-[ferredoxin] + 2 S-adenosyl-L-methionine = 2-methyladenosine(37) in tRNA + 5'-deoxyadenosine + L-methionine + 2 oxidized [2Fe-2S]-[ferredoxin] + S-adenosyl-L-homocysteine. Its function is as follows. Specifically methylates position 2 of adenine 2503 in 23S rRNA and position 2 of adenine 37 in tRNAs. m2A2503 modification seems to play a crucial role in the proofreading step occurring at the peptidyl transferase center and thus would serve to optimize ribosomal fidelity. The protein is Dual-specificity RNA methyltransferase RlmN of Dinoroseobacter shibae (strain DSM 16493 / NCIMB 14021 / DFL 12).